The primary structure comprises 141 residues: Hemoglobin subunit alpha-A (141 aa).

In terms of domain architecture, Globin spans 1–141 (VLSGPDKTNV…VGAVLTAKYR (141 aa)). H58 provides a ligand contact to O2. Heme b is bound at residue H87.

Belongs to the globin family. In terms of assembly, heterotetramer of two alpha chains and two beta chains. In terms of tissue distribution, red blood cells.

Involved in oxygen transport from the lung to the various peripheral tissues. The chain is Hemoglobin subunit alpha-A (HBAA) from Rhea americana (Greater rhea).